The primary structure comprises 290 residues: Endoplasmic reticulum-Golgi intermediate compartment protein 1 (290 aa).

The Cytoplasmic segment spans residues 1–26 (MPFDFRRFDIYRKVPKDLTQPTYTGA). Residues 27–47 (IISICCCLFITFLFLSELTGF) traverse the membrane as a helical segment. The Lumenal segment spans residues 48-254 (IANEIVNELY…RRQPMYRFIT (207 aa)). N-linked (GlcNAc...) asparagine glycosylation is present at Asn74. The helical transmembrane segment at 255–275 (TVCAIIGGTFTVAGILDSFIF) threads the bilayer. Over 276-290 (TASEAWKKIQLGKMQ) the chain is Cytoplasmic.

It belongs to the ERGIC family.

It is found in the endoplasmic reticulum membrane. The protein resides in the endoplasmic reticulum-Golgi intermediate compartment membrane. It localises to the golgi apparatus membrane. Possible role in transport between endoplasmic reticulum and Golgi. The chain is Endoplasmic reticulum-Golgi intermediate compartment protein 1 (ergic1) from Xenopus laevis (African clawed frog).